Reading from the N-terminus, the 212-residue chain is MKYNIVHGICLLFAITQAVGAVHFYAKSGETKCFYEHLSRGNLLIGDLDLYVEKDGLFEEDPESSLTITVDETFDNDHRVLNQKNSHTGDVTFTALDTGEHRFCFTPFYSKKSATLRVFIELEIGNVEALDSKKKEDMNSLKGRVGQLTQRLSSIRKEQDAIREKEAEFRNQSESANSKIMTWSVFQLLILLGTCAFQLRYLKNFFVKQKVV.

An N-terminal signal peptide occupies residues 1-20; sequence MKYNIVHGICLLFAITQAVG. Residues 21-178 lie on the Lumenal side of the membrane; sequence AVHFYAKSGE…FRNQSESANS (158 aa). Residues 31–124 enclose the GOLD domain; it reads TKCFYEHLSR…TLRVFIELEI (94 aa). Asn171 carries an N-linked (GlcNAc...) asparagine glycan. The chain crosses the membrane as a helical span at residues 179-199; it reads KIMTWSVFQLLILLGTCAFQL. Topologically, residues 200–212 are cytoplasmic; it reads RYLKNFFVKQKVV.

Belongs to the EMP24/GP25L family.

The protein resides in the endoplasmic reticulum membrane. Functionally, involved in vesicular protein trafficking. This chain is Protein ERP5 (ERP5), found in Saccharomyces cerevisiae (strain ATCC 204508 / S288c) (Baker's yeast).